The chain runs to 191 residues: Elongation factor P-like protein (191 aa).

The protein belongs to the elongation factor P family.

This is Elongation factor P-like protein from Photobacterium profundum (strain SS9).